The chain runs to 600 residues: Zinc finger and BTB domain-containing protein 46 (600 aa).

Residues 31–99 (CDACVVVEGK…MYSAHLALTS (69 aa)) form the BTB domain. The interval 173–222 (RRTSPANSSGDSAIASCHEGGSSYGKEDQEPKADGPDDVSSQSLWPGDVG) is disordered. The segment covering 197–207 (GKEDQEPKADG) has biased composition (basic and acidic residues). Lys-229 is covalently cross-linked (Glycyl lysine isopeptide (Lys-Gly) (interchain with G-Cter in SUMO2)). Position 234 is a phosphoserine (Ser-234). The tract at residues 235-278 (PSHYGGSELPSSKDTAIQNSLSEQGSGDGWQPTGRRKNRKNKET) is disordered. The segment covering 243 to 259 (LPSSKDTAIQNSLSEQG) has biased composition (polar residues). 2 consecutive C2H2-type zinc fingers follow at residues 418–436 (FKCP…LKRH) and 446–468 (YPCE…TLVH). The interval 513–600 (LDHGGGGEGS…EPDKDFAWIS (88 aa)) is disordered. Over residues 533-555 (YLEDPDDPRGEAEEELVEDEDED) the composition is skewed to acidic residues. Composition is skewed to basic and acidic residues over residues 556–574 (VAKW…LLGD) and 591–600 (EPDKDFAWIS).

In terms of processing, sumoylated. Desumoylation by DESI1 reverses transcriptional repression activity.

Its subcellular location is the nucleus. Functions as a transcriptional repressor for PRDM1. This is Zinc finger and BTB domain-containing protein 46 (Zbtb46) from Mus musculus (Mouse).